A 316-amino-acid chain; its full sequence is tRNA dimethylallyltransferase (316 aa).

ATP is bound at residue 17–24 (GPTASGKT). Substrate is bound at residue 19 to 24 (TASGKT). 4 interaction with substrate tRNA regions span residues 42–45 (DSAL), 166–170 (QRLSR), 247–252 (RCVGYR), and 280–287 (KRQITWLR).

This sequence belongs to the IPP transferase family. In terms of assembly, monomer. Mg(2+) serves as cofactor.

The enzyme catalyses adenosine(37) in tRNA + dimethylallyl diphosphate = N(6)-dimethylallyladenosine(37) in tRNA + diphosphate. In terms of biological role, catalyzes the transfer of a dimethylallyl group onto the adenine at position 37 in tRNAs that read codons beginning with uridine, leading to the formation of N6-(dimethylallyl)adenosine (i(6)A). In Escherichia fergusonii (strain ATCC 35469 / DSM 13698 / CCUG 18766 / IAM 14443 / JCM 21226 / LMG 7866 / NBRC 102419 / NCTC 12128 / CDC 0568-73), this protein is tRNA dimethylallyltransferase.